The sequence spans 391 residues: Flagellin (391 aa).

It belongs to the bacterial flagellin family.

Its subcellular location is the secreted. The protein resides in the bacterial flagellum. Functionally, flagellin is the subunit protein which polymerizes to form the filaments of bacterial flagella. The sequence is that of Flagellin (flaA) from Bordetella bronchiseptica (strain ATCC BAA-588 / NCTC 13252 / RB50) (Alcaligenes bronchisepticus).